A 157-amino-acid polypeptide reads, in one-letter code: Ribosome maturation factor RimP (157 aa).

Belongs to the RimP family.

It is found in the cytoplasm. Its function is as follows. Required for maturation of 30S ribosomal subunits. This Petrotoga mobilis (strain DSM 10674 / SJ95) protein is Ribosome maturation factor RimP.